Consider the following 271-residue polypeptide: MSNEVERVYPRLLDFVRKKYVSKNLLRVTLTGEDLIGFPEDQNGSHIKVFFPNQASGILQLPIREGDKVIWPEHKPVPRAYTVRQYRAQSNELDIDFVVHGEGTPGGGWALKAQTGSQLGLIGPGGPDPLIEPADWHIMAGDLSAVPAISAILEKMPSQAKGYVFLEVDDIEDKHDISHPEQMVIKWLVRDPNQAQPVLAMAIEQLPVPQGAESLSAFVAGENESVIACRKILRNEYRIARDKIYAIPYWKRGKNEEAYHEERHVVMDEEF.

One can recognise an FAD-binding FR-type domain in the interval 8 to 131; the sequence is VYPRLLDFVR…IGPGGPDPLI (124 aa).

Belongs to the SIP oxidoreductase family. It depends on FAD as a cofactor.

The protein resides in the cytoplasm. It catalyses the reaction 2 a Fe(II)-siderophore + NAD(+) + H(+) = 2 a Fe(III)-siderophore + NADH. Ferric-siderophore reductase involved in iron removal from the siderophores after their transport into the cell. Involved in intracellular removal of iron from iron-vibriobactin complex. Vibriobactin is an iron-chelating compound involved in the transport of iron from the bacterial environment into the cell cytoplasm. Ferric-vibriobactin reductase catalyzing the reduction of Fe(3+)-vibriobactin, a catecholate siderophore synthesized by V.cholerae. The sequence is that of Ferric vibriobactin reductase ViuB from Vibrio cholerae serotype O1 (strain ATCC 39541 / Classical Ogawa 395 / O395).